Reading from the N-terminus, the 501-residue chain is Lysine--tRNA ligase (501 aa).

Mg(2+)-binding residues include glutamate 406 and glutamate 413.

It belongs to the class-II aminoacyl-tRNA synthetase family. Homodimer. Requires Mg(2+) as cofactor.

It localises to the cytoplasm. The enzyme catalyses tRNA(Lys) + L-lysine + ATP = L-lysyl-tRNA(Lys) + AMP + diphosphate. The sequence is that of Lysine--tRNA ligase (lysS) from Halalkalibacterium halodurans (strain ATCC BAA-125 / DSM 18197 / FERM 7344 / JCM 9153 / C-125) (Bacillus halodurans).